The sequence spans 278 residues: MYSIYEAPFMKEMCEMTQNLWRNGWAEKNGGNISQLLEASEIKHYLDTDRYLWTEPLGFDASPLAGNVFLVSGSGKYFKNVQKNPADNLCIIKVSSDGASYHLLWGLENGGRPTSELASHLKCHIVRLSQDPDHRVILHTHATAVSAMTFVHDLDEAKFTRTLWQMITECLVVFPDGVAVVPWMVAGTNELGEASAAKMNDSRIVVWAHHGIMGAGTTMDDAFGLVETVEKAAKIYMQIAHFPTGIKQAITDEELVALAERFNVVPKAGILKEAGGVK.

Glu116 is a catalytic residue. Residues His139, His141, and His210 each contribute to the Zn(2+) site.

It belongs to the aldolase class II family. RhaD subfamily. Requires Zn(2+) as cofactor.

It is found in the cytoplasm. The enzyme catalyses L-rhamnulose 1-phosphate = (S)-lactaldehyde + dihydroxyacetone phosphate. It participates in carbohydrate degradation; L-rhamnose degradation; glycerone phosphate from L-rhamnose: step 3/3. Catalyzes the reversible cleavage of L-rhamnulose-1-phosphate to dihydroxyacetone phosphate (DHAP) and L-lactaldehyde. This is Rhamnulose-1-phosphate aldolase from Listeria welshimeri serovar 6b (strain ATCC 35897 / DSM 20650 / CCUG 15529 / CIP 8149 / NCTC 11857 / SLCC 5334 / V8).